We begin with the raw amino-acid sequence, 286 residues long: Prepilin leader peptidase/N-methyltransferase (286 aa).

The helical transmembrane segment at 11 to 31 (LGIFFVGLFSLMVGSFLNVVI) threads the bilayer. Positions 74, 77, 99, and 102 each coordinate Zn(2+). 6 helical membrane passes run 106 to 126 (ISAR…IVAF), 132 to 152 (LSLG…FIDA), 161 to 181 (LTLP…FINL), 185 to 205 (VIGA…FKLI), 231 to 251 (LPII…GIGL), and 257 to 277 (MPFG…GAQI).

The protein belongs to the peptidase A24 family. Requires Zn(2+) as cofactor.

The protein resides in the cell inner membrane. The catalysed reaction is Typically cleaves a -Gly-|-Phe- bond to release an N-terminal, basic peptide of 5-8 residues from type IV prepilin, and then N-methylates the new N-terminal amino group, the methyl donor being S-adenosyl-L-methionine.. Functionally, plays an essential role in type IV pili and type II pseudopili formation by proteolytically removing the leader sequence from substrate proteins and subsequently monomethylating the alpha-amino group of the newly exposed N-terminal phenylalanine. This Dichelobacter nodosus (Bacteroides nodosus) protein is Prepilin leader peptidase/N-methyltransferase (fimP).